The primary structure comprises 770 residues: 1,4-alpha-glucan branching enzyme GlgB (770 aa).

Asp-433 acts as the Nucleophile in catalysis. The active-site Proton donor is the Glu-486.

It belongs to the glycosyl hydrolase 13 family. GlgB subfamily. Monomer.

It carries out the reaction Transfers a segment of a (1-&gt;4)-alpha-D-glucan chain to a primary hydroxy group in a similar glucan chain.. It participates in glycan biosynthesis; glycogen biosynthesis. Its function is as follows. Catalyzes the formation of the alpha-1,6-glucosidic linkages in glycogen by scission of a 1,4-alpha-linked oligosaccharide from growing alpha-1,4-glucan chains and the subsequent attachment of the oligosaccharide to the alpha-1,6 position. The polypeptide is 1,4-alpha-glucan branching enzyme GlgB (glgB) (Synechocystis sp. (strain ATCC 27184 / PCC 6803 / Kazusa)).